A 743-amino-acid chain; its full sequence is F-box protein COS111 (743 aa).

In terms of domain architecture, F-box spans 145–191 (ELHIKNLPVEILDYIFYLVDDNLDYKSCMYTCKLFYFLAKPYYYENL). Disordered stretches follow at residues 224–257 (IKPG…DPQY) and 311–330 (FSNV…SSST). Positions 229–248 (DEDEQEEGQEENAENGEEEN) are enriched in acidic residues.

Its function is as follows. F-box protein probably involved in ubiquitin conjugation pathway. The sequence is that of F-box protein COS111 (COS111) from Candida albicans (strain SC5314 / ATCC MYA-2876) (Yeast).